A 308-amino-acid chain; its full sequence is Ribonuclease 3 (308 aa).

Residues 20 to 145 (YLRFYKMLGF…LVGAIYLDRG (126 aa)) form the RNase III domain. E62 contacts Mg(2+). The active site involves D66. 2 residues coordinate Mg(2+): N131 and E134. The active site involves E134. Residues 173-242 (NFKSKLIEWS…ARVALGKIKN (70 aa)) enclose the DRBM domain. The segment at 261 to 281 (QEEVTVSDSKPSDSGAVTPDL) is disordered.

Belongs to the ribonuclease III family. As to quaternary structure, homodimer. Mg(2+) is required as a cofactor.

It is found in the cytoplasm. It catalyses the reaction Endonucleolytic cleavage to 5'-phosphomonoester.. Digests double-stranded RNA. Involved in the processing of primary rRNA transcript to yield the immediate precursors to the large and small rRNAs (23S and 16S). Processes some mRNAs, and tRNAs when they are encoded in the rRNA operon. Processes pre-crRNA and tracrRNA of type II CRISPR loci if present in the organism. This chain is Ribonuclease 3, found in Phocaeicola vulgatus (strain ATCC 8482 / DSM 1447 / JCM 5826 / CCUG 4940 / NBRC 14291 / NCTC 11154) (Bacteroides vulgatus).